The sequence spans 289 residues: Cyclin-dependent kinase inhibitor 4 (289 aa).

Disordered stretches follow at residues 1-31 (MGKYIRKSKIDGAGAGAGGGGGGGGGGESSI), 56-160 (LQQQ…VSES), and 227-248 (SESNQREDSLSRSHRRRPTTPE). Gly residues predominate over residues 13–28 (AGAGAGGGGGGGGGGE). A compositionally biased stretch (low complexity) spans 56–80 (LQQQQQRCLLQKPSSPSSLPPTSAS). Positions 134-144 (CGRNPNPRSNL) are enriched in polar residues.

This sequence belongs to the CDI family. ICK/KRP subfamily. Specifically interacts with CDKA-1, but not with CDKB1-1. Interacts with CYCD4-1. Binds to FBL17. As to expression, expressed in leaves and flowers and at lower levels in roots.

The protein localises to the nucleus. It localises to the nucleoplasm. Its function is as follows. Binds and inhibits CYCD2-1/CDKA-1 complex kinase activity. May target specifically CDKA-1. This is Cyclin-dependent kinase inhibitor 4 (KRP4) from Arabidopsis thaliana (Mouse-ear cress).